A 287-amino-acid polypeptide reads, in one-letter code: Putative sugar uptake protein LJ_0170 (287 aa).

The next 10 helical transmembrane spans lie at 4–23 (VYLFLPAIGWGLMPLVIASV), 28–50 (VYNQIVGTVAASFIFGAIVMAIM), 56–78 (WSLFLLSALGGACWVIGQVGQYI), 91–108 (ISTGLQLIGVPLVGVLAF), 118–137 (LYGFIGILVLIIGVVLTSFT), 150–169 (VSTIILLVLTSLGYITSSSI), 179–198 (SIFFGQTFGMLVAVFIYTLV), 211–230 (VQSGGAGILYAIAALAYILS), 240–259 (FVISQLCVVISTLGGLIFLH), and 266–285 (GLIFTIAGLILIIGGAMLTT).

It belongs to the GRP transporter (TC 2.A.7.5) family.

It localises to the cell membrane. In Lactobacillus johnsonii (strain CNCM I-12250 / La1 / NCC 533), this protein is Putative sugar uptake protein LJ_0170.